The chain runs to 131 residues: Small ribosomal subunit protein uS12 (131 aa).

The residue at position 89 (D89) is a 3-methylthioaspartic acid.

The protein belongs to the universal ribosomal protein uS12 family. Part of the 30S ribosomal subunit. Contacts proteins S8 and S17. May interact with IF1 in the 30S initiation complex.

Its function is as follows. With S4 and S5 plays an important role in translational accuracy. Interacts with and stabilizes bases of the 16S rRNA that are involved in tRNA selection in the A site and with the mRNA backbone. Located at the interface of the 30S and 50S subunits, it traverses the body of the 30S subunit contacting proteins on the other side and probably holding the rRNA structure together. The combined cluster of proteins S8, S12 and S17 appears to hold together the shoulder and platform of the 30S subunit. The polypeptide is Small ribosomal subunit protein uS12 (Karelsulcia muelleri (strain GWSS) (Sulcia muelleri)).